Here is a 662-residue protein sequence, read N- to C-terminus: DNA ligase (662 aa).

Residues 31-35 (DKDYD) and 79-80 (SL) each bind NAD(+). The N6-AMP-lysine intermediate role is filled by K121. Residues R143, E177, and K313 each contribute to the NAD(+) site. C406, C409, C422, and C428 together coordinate Zn(2+). Residues 586-662 (VLESPFMGKT…LSEEEFENMI (77 aa)) enclose the BRCT domain.

It belongs to the NAD-dependent DNA ligase family. LigA subfamily. It depends on Mg(2+) as a cofactor. Mn(2+) is required as a cofactor.

The catalysed reaction is NAD(+) + (deoxyribonucleotide)n-3'-hydroxyl + 5'-phospho-(deoxyribonucleotide)m = (deoxyribonucleotide)n+m + AMP + beta-nicotinamide D-nucleotide.. Functionally, DNA ligase that catalyzes the formation of phosphodiester linkages between 5'-phosphoryl and 3'-hydroxyl groups in double-stranded DNA using NAD as a coenzyme and as the energy source for the reaction. It is essential for DNA replication and repair of damaged DNA. This is DNA ligase from Clostridium perfringens (strain SM101 / Type A).